The following is a 154-amino-acid chain: UPF0225 protein SG1365 (154 aa).

The protein belongs to the UPF0225 family.

The chain is UPF0225 protein SG1365 from Sodalis glossinidius (strain morsitans).